A 218-amino-acid polypeptide reads, in one-letter code: Ribose-5-phosphate isomerase A (218 aa).

Substrate-binding positions include 27–30 (TGST), 80–83 (DGAD), and 93–96 (KGGG). The active-site Proton acceptor is the Glu-102. Lys-120 is a binding site for substrate.

This sequence belongs to the ribose 5-phosphate isomerase family. As to quaternary structure, homodimer.

It catalyses the reaction aldehydo-D-ribose 5-phosphate = D-ribulose 5-phosphate. It functions in the pathway carbohydrate degradation; pentose phosphate pathway; D-ribose 5-phosphate from D-ribulose 5-phosphate (non-oxidative stage): step 1/1. Functionally, catalyzes the reversible conversion of ribose-5-phosphate to ribulose 5-phosphate. This Thiobacillus denitrificans (strain ATCC 25259 / T1) protein is Ribose-5-phosphate isomerase A.